A 376-amino-acid polypeptide reads, in one-letter code: Dehydrogenase/reductase SDR family member FEY (376 aa).

Residue Ser2 is modified to N-acetylserine. 61–85 is an NAD(+) binding site; that stretch reads VVTGSTSGIGRETARQLAEAGAHVV. Ser199 contacts substrate. Tyr227 functions as the Proton acceptor in the catalytic mechanism.

It belongs to the short-chain dehydrogenases/reductases (SDR) family. In terms of tissue distribution, expressed in roots, stems, leaves and flowers and, at lower levels, in siliques.

Functionally, putative oxidoreductase. Required for vegetative shoot apex development, especially during leaf positioning and for shoot apical meristem (SAM) maintenance. This chain is Dehydrogenase/reductase SDR family member FEY, found in Arabidopsis thaliana (Mouse-ear cress).